An 876-amino-acid chain; its full sequence is Probable galactinol--sucrose galactosyltransferase 4 (876 aa).

Residues S7 and S9 each carry the phosphoserine modification.

Belongs to the glycosyl hydrolases 36 family.

The enzyme catalyses alpha-D-galactosyl-(1-&gt;3)-1D-myo-inositol + sucrose = raffinose + myo-inositol. Transglycosidase operating by a ping-pong reaction mechanism. Involved in the synthesis of raffinose, a major soluble carbohydrate in seeds, roots and tubers. In Arabidopsis thaliana (Mouse-ear cress), this protein is Probable galactinol--sucrose galactosyltransferase 4 (RFS4).